Reading from the N-terminus, the 187-residue chain is Elongation factor P (187 aa).

The protein belongs to the elongation factor P family.

It localises to the cytoplasm. It functions in the pathway protein biosynthesis; polypeptide chain elongation. In terms of biological role, involved in peptide bond synthesis. Stimulates efficient translation and peptide-bond synthesis on native or reconstituted 70S ribosomes in vitro. Probably functions indirectly by altering the affinity of the ribosome for aminoacyl-tRNA, thus increasing their reactivity as acceptors for peptidyl transferase. The polypeptide is Elongation factor P (Tolumonas auensis (strain DSM 9187 / NBRC 110442 / TA 4)).